The sequence spans 282 residues: Pantothenate synthetase (282 aa).

Residue 30–37 participates in ATP binding; it reads MGYLHEGH. The active-site Proton donor is the His-37. Gln-61 serves as a coordination point for (R)-pantoate. Gln-61 serves as a coordination point for beta-alanine. Residue 147 to 150 participates in ATP binding; the sequence is GMKD. Position 153 (Gln-153) interacts with (R)-pantoate. Residues Val-176 and 184–187 each bind ATP; that span reads KSSR.

It belongs to the pantothenate synthetase family. In terms of assembly, homodimer.

Its subcellular location is the cytoplasm. The enzyme catalyses (R)-pantoate + beta-alanine + ATP = (R)-pantothenate + AMP + diphosphate + H(+). It participates in cofactor biosynthesis; (R)-pantothenate biosynthesis; (R)-pantothenate from (R)-pantoate and beta-alanine: step 1/1. In terms of biological role, catalyzes the condensation of pantoate with beta-alanine in an ATP-dependent reaction via a pantoyl-adenylate intermediate. This is Pantothenate synthetase from Bacillus cereus (strain ATCC 10987 / NRS 248).